A 56-amino-acid polypeptide reads, in one-letter code: Small ribosomal subunit protein uS14 (56 aa).

The residue at position 9 (serine 9) is a Phosphoserine. Arginine 12 carries the post-translational modification Omega-N-methylarginine. Zn(2+) is bound by residues cysteine 21, cysteine 24, cysteine 39, and cysteine 42. Lysine 48 is subject to N6-acetyllysine.

Belongs to the universal ribosomal protein uS14 family. In terms of assembly, component of the 40S small ribosomal subunit. Requires Zn(2+) as cofactor.

The protein localises to the cytoplasm. It is found in the cytosol. Its subcellular location is the rough endoplasmic reticulum. Functionally, component of the small ribosomal subunit. The ribosome is a large ribonucleoprotein complex responsible for the synthesis of proteins in the cell. The protein is Small ribosomal subunit protein uS14 (RPS29) of Sus scrofa (Pig).